The following is a 443-amino-acid chain: Ribulose bisphosphate carboxylase large chain (443 aa).

Lys3 bears the N6,N6,N6-trimethyllysine mark. Substrate-binding residues include Asn112 and Thr162. Lys164 functions as the Proton acceptor in the catalytic mechanism. Residue Lys166 participates in substrate binding. The Mg(2+) site is built by Lys190, Asp192, and Glu193. The residue at position 190 (Lys190) is an N6-carboxylysine. His283 functions as the Proton acceptor in the catalytic mechanism. Substrate-binding residues include Arg284, His316, and Ser368.

Belongs to the RuBisCO large chain family. Type I subfamily. In terms of assembly, heterohexadecamer of 8 large chains and 8 small chains; disulfide-linked. The disulfide link is formed within the large subunit homodimers. It depends on Mg(2+) as a cofactor. The disulfide bond which can form in the large chain dimeric partners within the hexadecamer appears to be associated with oxidative stress and protein turnover.

It localises to the plastid. It is found in the chloroplast. The catalysed reaction is 2 (2R)-3-phosphoglycerate + 2 H(+) = D-ribulose 1,5-bisphosphate + CO2 + H2O. The enzyme catalyses D-ribulose 1,5-bisphosphate + O2 = 2-phosphoglycolate + (2R)-3-phosphoglycerate + 2 H(+). In terms of biological role, ruBisCO catalyzes two reactions: the carboxylation of D-ribulose 1,5-bisphosphate, the primary event in carbon dioxide fixation, as well as the oxidative fragmentation of the pentose substrate in the photorespiration process. Both reactions occur simultaneously and in competition at the same active site. In Iris germanica (Bearded iris), this protein is Ribulose bisphosphate carboxylase large chain.